The following is an 87-amino-acid chain: Small ribosomal subunit protein bS20 (87 aa).

Belongs to the bacterial ribosomal protein bS20 family.

Its function is as follows. Binds directly to 16S ribosomal RNA. This is Small ribosomal subunit protein bS20 from Finegoldia magna (strain ATCC 29328 / DSM 20472 / WAL 2508) (Peptostreptococcus magnus).